The following is a 670-amino-acid chain: DNA ligase (670 aa).

NAD(+) contacts are provided by residues 33–37 (DAEFD), 82–83 (SL), and glutamate 113. Lysine 115 functions as the N6-AMP-lysine intermediate in the catalytic mechanism. NAD(+) contacts are provided by arginine 136, glutamate 170, lysine 285, and lysine 309. The Zn(2+) site is built by cysteine 403, cysteine 406, cysteine 421, and cysteine 427. The region spanning 587-670 (EQNLYLSGKT…EVLKAGDNNG (84 aa)) is the BRCT domain.

It belongs to the NAD-dependent DNA ligase family. LigA subfamily. It depends on Mg(2+) as a cofactor. Mn(2+) serves as cofactor.

It carries out the reaction NAD(+) + (deoxyribonucleotide)n-3'-hydroxyl + 5'-phospho-(deoxyribonucleotide)m = (deoxyribonucleotide)n+m + AMP + beta-nicotinamide D-nucleotide.. Functionally, DNA ligase that catalyzes the formation of phosphodiester linkages between 5'-phosphoryl and 3'-hydroxyl groups in double-stranded DNA using NAD as a coenzyme and as the energy source for the reaction. It is essential for DNA replication and repair of damaged DNA. The sequence is that of DNA ligase from Halothermothrix orenii (strain H 168 / OCM 544 / DSM 9562).